We begin with the raw amino-acid sequence, 398 residues long: ORC1-type DNA replication protein 1 (398 aa).

ATP contacts are provided by residues 67–71, tyrosine 208, and arginine 220; that span reads TGKTA.

The protein belongs to the CDC6/cdc18 family.

Functionally, involved in regulation of DNA replication. This Sulfurisphaera tokodaii (strain DSM 16993 / JCM 10545 / NBRC 100140 / 7) (Sulfolobus tokodaii) protein is ORC1-type DNA replication protein 1 (cdc6-1).